The following is a 42-amino-acid chain: Photosystem I reaction center subunit IX (42 aa).

The helical transmembrane segment at Tyr-7 to Ile-27 threads the bilayer.

Belongs to the PsaJ family.

It is found in the plastid. Its subcellular location is the chloroplast thylakoid membrane. Its function is as follows. May help in the organization of the PsaE and PsaF subunits. This is Photosystem I reaction center subunit IX from Platanus occidentalis (Sycamore).